The sequence spans 359 residues: tRNA N6-adenosine threonylcarbamoyltransferase (359 aa).

The Fe cation site is built by histidine 121 and histidine 125. Residues 143 to 147 (LVSGG), aspartate 176, glycine 189, and asparagine 286 each bind substrate. Aspartate 311 lines the Fe cation pocket.

The protein belongs to the KAE1 / TsaD family. Fe(2+) is required as a cofactor.

The protein resides in the cytoplasm. It catalyses the reaction L-threonylcarbamoyladenylate + adenosine(37) in tRNA = N(6)-L-threonylcarbamoyladenosine(37) in tRNA + AMP + H(+). In terms of biological role, required for the formation of a threonylcarbamoyl group on adenosine at position 37 (t(6)A37) in tRNAs that read codons beginning with adenine. Is involved in the transfer of the threonylcarbamoyl moiety of threonylcarbamoyl-AMP (TC-AMP) to the N6 group of A37, together with TsaE and TsaB. TsaD likely plays a direct catalytic role in this reaction. In Jannaschia sp. (strain CCS1), this protein is tRNA N6-adenosine threonylcarbamoyltransferase.